The sequence spans 1891 residues: TATA-binding protein-associated factor mot1 (1891 aa).

The HEAT 1 repeat unit spans residues 30–68 (PDELFNLLGRILPYLRSKSWDTRAAAAKAIGLIVANADT). 3 disordered regions span residues 184–216 (FVASREHSIQGTSQPLASPIEPANGEESGLSKR), 241–283 (LSSR…LDRS), and 295–316 (FKGASVPENPLLQPESTEEGPN). The span at 264-275 (ENGEERNGDSKP) shows a compositional bias: basic and acidic residues. HEAT repeat units lie at residues 473 to 511 (SKLMDGVLEAVMKGLGDYDDDVRAVSAATLVPIAEEFVK) and 569 to 606 (SSFGKLVPRLYPFLRHTITSVRSAVLRALMTFLQLEGE). Positions 699–710 (SAAAPARSSPAS) are enriched in low complexity. Residues 699 to 740 (SAAAPARSSPASNTPEGTKGRRRKSEKKEAPPPSAHNVDGHM) are disordered. 4 HEAT repeats span residues 957–996 (PKKPSHIIKGMMDSIKKEENAELQQRSATAITSLVEYYTT), 1139–1177 (YPWVVDLLPLVVKALQCKLSVIRYAAAKCFATICSVITV), 1181–1216 (TMLVEKVLPMINDALDVHHRQGAVECIYHLIHVMED), and 1219–1257 (LPYVIFLVVPVLGRMSDSDNEVRLLATTSFATLVKLVPL). Residues 1316–1489 (AFLNRYNLHG…WSLFDFLMPG (174 aa)) form the Helicase ATP-binding domain. Residue 1329-1336 (DDMGLGKT) participates in ATP binding. The DEAH box signature appears at 1440–1443 (DEGH). The stretch at 1526-1565 (EALHKQVLPFLLRRLKEEVLNDLPPKIIQNYYCDPSELQR) is one HEAT 8 repeat. Residues 1663-1813 (DLSGASYVSP…STVVNQQNAG (151 aa)) form the Helicase C-terminal domain.

Belongs to the SNF2/RAD54 helicase family. Forms the NCT transcriptional regulatory complex with nctA and nctB.

Its subcellular location is the nucleus. Regulates transcription in association with TATA binding protein (TBP). Removes TBP from the TATA box via its C-terminal ATPase activity. Both transcription activation and repression require its ATPase activity. Part of the NCT transcriptional regulatory complex that acts as a key regulator of ergosterol biosynthesis and the azole exporter cdr1B. The NCT complex binds the promoters of genes linked to azole susceptibility, and especially represses the expression of cdr1B transporter. In Aspergillus fumigatus (strain CBS 144.89 / FGSC A1163 / CEA10) (Neosartorya fumigata), this protein is TATA-binding protein-associated factor mot1.